A 62-amino-acid polypeptide reads, in one-letter code: UPF0434 protein Rpic_2808 (62 aa).

It belongs to the UPF0434 family.

The polypeptide is UPF0434 protein Rpic_2808 (Ralstonia pickettii (strain 12J)).